The chain runs to 154 residues: Myoglobin (154 aa).

Residues 2-148 (GLSDGEWQLV…FRNDIAAKYK (147 aa)) form the Globin domain. The residue at position 4 (Ser4) is a Phosphoserine. Residue His65 coordinates nitrite. Residue His65 participates in O2 binding. A phosphothreonine mark is found at Thr68 and Thr75. His94 is a heme b binding site. Ser121 carries the phosphoserine modification.

It belongs to the globin family. Monomeric.

Its subcellular location is the cytoplasm. It localises to the sarcoplasm. It catalyses the reaction Fe(III)-heme b-[protein] + nitric oxide + H2O = Fe(II)-heme b-[protein] + nitrite + 2 H(+). The enzyme catalyses H2O2 + AH2 = A + 2 H2O. Functionally, monomeric heme protein which primary function is to store oxygen and facilitate its diffusion within muscle tissues. Reversibly binds oxygen through a pentacoordinated heme iron and enables its timely and efficient release as needed during periods of heightened demand. Depending on the oxidative conditions of tissues and cells, and in addition to its ability to bind oxygen, it also has a nitrite reductase activity whereby it regulates the production of bioactive nitric oxide. Under stress conditions, like hypoxia and anoxia, it also protects cells against reactive oxygen species thanks to its pseudoperoxidase activity. In Mus musculus (Mouse), this protein is Myoglobin.